Reading from the N-terminus, the 366-residue chain is Isocitrate dehydrogenase [NAD] subunit alpha, mitochondrial (366 aa).

The transit peptide at 1-27 (MAGSAWVSKVSRLLGAFHNTKQVTRGF) directs the protein to the mitochondrion. At K77 the chain carries N6-succinyllysine. T101 is subject to Phosphothreonine. Substrate-binding residues include R115, R125, and R146. The residue at position 223 (K223) is an N6-acetyllysine. Mg(2+) is bound by residues D233, D257, and D261. K343 bears the N6-acetyllysine; alternate mark. K343 carries the post-translational modification N6-succinyllysine; alternate. N6-succinyllysine is present on K350.

It belongs to the isocitrate and isopropylmalate dehydrogenases family. In terms of assembly, heterooligomer of subunits alpha (IDH3A), beta (IDH3B), and gamma (IDH3G) in the apparent ratio of 2:1:1. The heterodimer containing one IDH3A and one IDH3B subunit and the heterodimer containing one IDH3A and one IDH3G subunit assemble into a heterotetramer (which contains two subunits of IDH3A, one of IDH3B and one of IDH3G) and further into the heterooctamer. The cofactor is Mg(2+). Mn(2+) serves as cofactor. In terms of tissue distribution, expressed in brown adipose tissue (BAT).

It is found in the mitochondrion. It carries out the reaction D-threo-isocitrate + NAD(+) = 2-oxoglutarate + CO2 + NADH. With respect to regulation, the heterotetramer and the heterodimer composed of IDH3A and IDH3G subunits can be allosterically activated by citrate (CIT) or/and ADP, and the two activators can act independently or synergistically. The heterodimer composed of IDH3A and IDH3B subunits cannot be allosterically regulated and the allosteric regulation of the heterotetramer is through the IDH3G subunit and not the IDH3B subunit. The IDH3G subunit contains the allosteric site which consists of a CIT-binding site and an ADP-binding site, and the binding of CIT and ADP causes conformational changes at the allosteric site which are transmitted to the active site in the catalytic subunit (IDH3A) through a cascade of conformational changes at the heterodimer interface, leading to stabilization of the isocitrate-binding at the active site and thus activation of the enzyme. ATP can activate the heterotetramer and the heterodimer composed of IDH3A and IDH3G subunits at low concentrations but inhibits their activities at high concentrations, whereas ATP exhibits only inhibitory effect on the heterodimer composed of IDH3A and IDH3B subunits. Functionally, catalytic subunit of the enzyme which catalyzes the decarboxylation of isocitrate (ICT) into alpha-ketoglutarate. The heterodimer composed of the alpha (IDH3A) and beta (IDH3B) subunits and the heterodimer composed of the alpha (IDH3A) and gamma (IDH3G) subunits, have considerable basal activity but the full activity of the heterotetramer (containing two subunits of IDH3A, one of IDH3B and one of IDH3G) requires the assembly and cooperative function of both heterodimers. The polypeptide is Isocitrate dehydrogenase [NAD] subunit alpha, mitochondrial (Rattus norvegicus (Rat)).